Here is a 182-residue protein sequence, read N- to C-terminus: Prorelaxin (182 aa).

The signal sequence occupies residues 1–24 (MPRLFSYLLGVWLLLSQLPREIPG). At Gln-25 the chain carries Pyrrolidone carboxylic acid. Intrachain disulfides connect Cys-34–Cys-169, Cys-46–Cys-182, and Cys-168–Cys-173. The propeptide at 57–154 (SLEEPQLETG…LKNLGLDKHS (98 aa)) is connecting peptide. The propeptide occupies 159–160 (LF).

Belongs to the insulin family. Heterodimer of a B chain and an A chain linked by two disulfide bonds.

It is found in the secreted. In terms of biological role, relaxin is an ovarian hormone that acts with estrogen to produce dilatation of the birth canal in many mammals. This Sus scrofa (Pig) protein is Prorelaxin (RLN).